Here is a 321-residue protein sequence, read N- to C-terminus: Nucleotide-binding protein GOX0815 (321 aa).

Residue 27 to 34 (GLSGAGKS) coordinates ATP. 72–75 (DVRS) is a binding site for GTP.

It belongs to the RapZ-like family.

Its function is as follows. Displays ATPase and GTPase activities. This Gluconobacter oxydans (strain 621H) (Gluconobacter suboxydans) protein is Nucleotide-binding protein GOX0815.